A 696-amino-acid polypeptide reads, in one-letter code: Polyribonucleotide nucleotidyltransferase (696 aa).

Asp-489 and Asp-495 together coordinate Mg(2+). Residues 556–615 (PQYVTMKINPEKIRDVIGKGGVVIREITEATNCAIDISDDGTIKIAAHTTEEGEAAKRRI) enclose the KH domain. An S1 motif domain is found at 625-693 (GKVYEGTVVK…RQGRVRLSMK (69 aa)).

It belongs to the polyribonucleotide nucleotidyltransferase family. In terms of assembly, component of the RNA degradosome, which is a multiprotein complex involved in RNA processing and mRNA degradation. It depends on Mg(2+) as a cofactor.

The protein localises to the cytoplasm. The catalysed reaction is RNA(n+1) + phosphate = RNA(n) + a ribonucleoside 5'-diphosphate. Functionally, involved in mRNA degradation. Catalyzes the phosphorolysis of single-stranded polyribonucleotides processively in the 3'- to 5'-direction. In Coxiella burnetii (strain CbuG_Q212) (Coxiella burnetii (strain Q212)), this protein is Polyribonucleotide nucleotidyltransferase.